Here is a 606-residue protein sequence, read N- to C-terminus: Mitogen-activated protein kinase kinase kinase 7 (606 aa).

The interval 1–300 is interaction with MAPK8IP1; it reads MSTASAASSS…FPGADEPLQY (300 aa). The 256-residue stretch at 36-291 folds into the Protein kinase domain; that stretch reads IEVEEVVGRG…KIMTHLMRYF (256 aa). ATP contacts are provided by residues 42 to 50 and lysine 63; that span reads VGRGAFGVV. Lysine 72 participates in a covalent cross-link: Glycyl lysine isopeptide (Lys-Gly) (interchain with G-Cter in ubiquitin). Aspartate 156 acts as the Proton acceptor in catalysis. A Glycyl lysine isopeptide (Lys-Gly) (interchain with G-Cter in ubiquitin) cross-link involves residue lysine 158. (Microbial infection) O-acetylthreonine; by Yersinia YopJ; alternate is present on residues threonine 184 and threonine 187. Residues threonine 184 and threonine 187 each carry the phosphothreonine; by autocatalysis; alternate modification. Residue serine 192 is modified to Phosphoserine; by autocatalysis. Residue lysine 209 forms a Glycyl lysine isopeptide (Lys-Gly) (interchain with G-Cter in ubiquitin) linkage. A disordered region spans residues 301–338; the sequence is PCQYSDEGQSNSATSTGSFMDIASTNTSNKSDTNMEQV. A compositionally biased stretch (polar residues) spans 306–338; the sequence is DEGQSNSATSTGSFMDIASTNTSNKSDTNMEQV. Threonine 341 carries the (Microbial infection) O-acetylthreonine; by Yersinia YopJ; alternate modification. The disordered stretch occupies residues 354 to 391; that stretch reads KNQAKQQSESGRLSLGASRGSSVESLPPTSEGKRMSAD. A compositionally biased stretch (low complexity) spans 361–375; that stretch reads SESGRLSLGASRGSS. Phosphoserine is present on residues serine 367, serine 389, and serine 439. The segment covering 443-452 has biased composition (polar residues); that stretch reads LTVTGTEPGQ. Positions 443–493 are disordered; that stretch reads LTVTGTEPGQVSSRSSSPSVRMITTSGPTSEKPTRSHPWTPDDSTDTNGSD. (Microbial infection) O-acetylthreonine; by Yersinia YopJ; alternate is present on residues threonine 444, threonine 446, and threonine 448. Low complexity predominate over residues 453-463; that stretch reads VSSRSSSPSVR. The residue at position 455 (serine 455) is a Phosphoserine. The segment covering 464 to 473 has biased composition (polar residues); the sequence is MITTSGPTSE. A (Microbial infection) O-acetylthreonine; by Yersinia YopJ; alternate modification is found at threonine 467.

The protein belongs to the protein kinase superfamily. STE Ser/Thr protein kinase family. MAP kinase kinase kinase subfamily. In terms of assembly, can form homodimer. Binds both upstream activators and downstream substrates in multimolecular complexes. Interacts with TAB1/MAP3K7IP1, TAB2/MAP3K7IP2 and TAB3/MAP3K7IP3. Identified in the TRIKA2 complex composed of MAP3K7/TAK1, TAB1/MAP3K7IP1 and TAB2/MAP3K7IP2. Interacts with PPM1L and PPM1B/PP2CB. Interaction with PP2A and PPP6C leads to its repressed activity. Interacts with TRAF6 and TAB1/MAP3K7IP1; during IL-1 signaling. Interacts with TAOK1 and TAOK2; interaction with TAOK2 interferes with MAP3K7 interaction with IKKA, thus preventing NF-kappa-B activation. Interacts with DYNC2I2 (via WD domains). Interacts with CYLD and RBCK1. Interacts with TGFBR1; induces MAP3K7/TAK1 activation by TRAF6. Interacts with MAPK8IP1 and SMAD6. Interacts with isoform 1 of VRK2. Interacts with DAB2; the interaction is induced by TGF-beta stimulation and may mediate TGF-beta stimulated JNK activation. Interacts with TRIM5. Part of a complex containing ITCH, NDFIP1 and MAP3K7. Interacts with IFIT5; the interaction synergizes the recruitment of IKK to MAP3K7 and enhances IKK phosphorylation. Interacts with PLEKHM1 (via N- and C-terminus). Interacts with TRIM8. Found in a complex with SH3RF1, RAC2, MAP2K7/MKK7, MAPK8IP1/JIP1, MAPK8/JNK1 and MAPK9/JNK2. Interacts with SASH1. Interacts with RIPK1. (Microbial infection) Interacts with herpes simplex virus 2 protein US2; this interaction induces MAP3K7 phosphorylation and subsequent activation. The cofactor is Mg(2+). Post-translationally, association with TAB1/MAP3K7IP1 promotes autophosphorylation at Ser-192 and subsequent activation. Association with TAB2/MAP3K7IP2, itself associated with free unanchored Lys-63 polyubiquitin chain, promotes autophosphorylation and subsequent activation of MAP3K7. Dephosphorylation at Ser-192 by PPM1B/PP2CB and at Thr-187 by PP2A and PPP6C leads to inactivation. In terms of processing, 'Lys-48'-linked polyubiquitination at Lys-72 is induced by TNFalpha, and leads to proteasomal degradation. Undergoes 'Lys-48'-linked polyubiquitination catalyzed by ITCH. Requires 'Lys-63'-linked polyubiquitination for autophosphorylation and subsequent activation. 'Lys-63'-linked ubiquitination does not lead to proteasomal degradation. Deubiquitinated by CYLD, a protease that selectively cleaves 'Lys-63'-linked ubiquitin chains. Deubiquitinated by Y.enterocolitica YopP. Deubiquitinated by USP19; leading to negative regulation of TNF-alpha- and IL-1beta-triggered NF-kappa-B activation. (Microbial infection) Cleaved and inactivated by the proteases 3C of coxsackievirus A16 and human enterovirus D68, allowing the virus to disrupt TRAF6-triggered NF-kappa-B induction. Post-translationally, (Microbial infection) Acetylation of Thr-184 and Thr-187 by Yersinia YopJ prevents phosphorylation and activation, thus blocking the MAPK signaling pathway. In terms of tissue distribution, isoform 1A is the most abundant in ovary, skeletal muscle, spleen and blood mononuclear cells. Isoform 1B is highly expressed in brain, kidney and small intestine. Isoform 1C is the major form in prostate. Isoform 1D is the less abundant form.

The protein localises to the cytoplasm. It localises to the cell membrane. The catalysed reaction is L-seryl-[protein] + ATP = O-phospho-L-seryl-[protein] + ADP + H(+). It catalyses the reaction L-threonyl-[protein] + ATP = O-phospho-L-threonyl-[protein] + ADP + H(+). Its activity is regulated as follows. Activated by pro-inflammatory cytokines and in response to physical and chemical stresses, including osmotic stress, oxidative stress, arsenic and ultraviolet light irradiation. Activated by 'Lys-63'-linked polyubiquitination and by autophosphorylation. Association with TAB1/MAP3K7IP1 and TAB2/MAP3K7IP2 promotes activation through autophosphorylation, whereas PPM1B/PP2CB, PP2A and PPP6C dephosphorylation leads to inactivation. Ceramides are also able to activate MAP3K7/TAK1. In terms of biological role, serine/threonine kinase which acts as an essential component of the MAP kinase signal transduction pathway. Plays an important role in the cascades of cellular responses evoked by changes in the environment. Mediates signal transduction of TRAF6, various cytokines including interleukin-1 (IL-1), transforming growth factor-beta (TGFB), TGFB-related factors like BMP2 and BMP4, toll-like receptors (TLR), tumor necrosis factor receptor CD40 and B-cell receptor (BCR). Once activated, acts as an upstream activator of the MKK/JNK signal transduction cascade and the p38 MAPK signal transduction cascade through the phosphorylation and activation of several MAP kinase kinases like MAP2K1/MEK1, MAP2K3/MKK3, MAP2K6/MKK6 and MAP2K7/MKK7. These MAP2Ks in turn activate p38 MAPKs and c-jun N-terminal kinases (JNKs); both p38 MAPK and JNK pathways control the transcription factors activator protein-1 (AP-1). Independently of MAP2Ks and p38 MAPKs, acts as a key activator of NF-kappa-B by promoting activation of the I-kappa-B-kinase (IKK) core complex. Mechanistically, recruited to polyubiquitin chains of RIPK2 and IKBKG/NEMO via TAB2/MAP3K7IP2 and TAB3/MAP3K7IP3, and catalyzes phosphorylation and activation of IKBKB/IKKB component of the IKK complex, leading to NF-kappa-B activation. In osmotic stress signaling, plays a major role in the activation of MAPK8/JNK1, but not that of NF-kappa-B. Promotes TRIM5 capsid-specific restriction activity. Phosphorylates RIPK1 at 'Ser-321' which positively regulates RIPK1 interaction with RIPK3 to promote necroptosis but negatively regulates RIPK1 kinase activity and its interaction with FADD to mediate apoptosis. Phosphorylates STING1 in response to cGAMP-activation, promoting association between STEEP1 and STING1 and STING1 translocation to COPII vesicles. The protein is Mitogen-activated protein kinase kinase kinase 7 of Homo sapiens (Human).